The sequence spans 372 residues: Glutamate 5-kinase (372 aa).

Lysine 14 is a binding site for ATP. Substrate is bound by residues serine 54, aspartate 141, and asparagine 153. 173–174 (TD) serves as a coordination point for ATP. Residues 280–358 (RGHVVIDAGA…GEIESVLGYM (79 aa)) enclose the PUA domain.

It belongs to the glutamate 5-kinase family.

The protein localises to the cytoplasm. It carries out the reaction L-glutamate + ATP = L-glutamyl 5-phosphate + ADP. The protein operates within amino-acid biosynthesis; L-proline biosynthesis; L-glutamate 5-semialdehyde from L-glutamate: step 1/2. Its function is as follows. Catalyzes the transfer of a phosphate group to glutamate to form L-glutamate 5-phosphate. The chain is Glutamate 5-kinase from Burkholderia multivorans (strain ATCC 17616 / 249).